We begin with the raw amino-acid sequence, 116 residues long: RutC family protein HI_1627 (116 aa).

It belongs to the RutC family.

The protein is RutC family protein HI_1627 of Haemophilus influenzae (strain ATCC 51907 / DSM 11121 / KW20 / Rd).